Consider the following 149-residue polypeptide: Large ribosomal subunit protein uL30 (149 aa).

This sequence belongs to the universal ribosomal protein uL30 family. Part of the 50S ribosomal subunit.

The chain is Large ribosomal subunit protein uL30 from Methanopyrus kandleri (strain AV19 / DSM 6324 / JCM 9639 / NBRC 100938).